A 284-amino-acid polypeptide reads, in one-letter code: L-ribulose-5-phosphate 3-epimerase UlaE (284 aa).

It belongs to the L-ribulose-5-phosphate 3-epimerase family.

The enzyme catalyses L-ribulose 5-phosphate = L-xylulose 5-phosphate. Its pathway is cofactor degradation; L-ascorbate degradation; D-xylulose 5-phosphate from L-ascorbate: step 3/4. Functionally, catalyzes the isomerization of L-xylulose-5-phosphate to L-ribulose-5-phosphate. Is involved in the anaerobic L-ascorbate utilization. The chain is L-ribulose-5-phosphate 3-epimerase UlaE from Escherichia coli (strain SMS-3-5 / SECEC).